Reading from the N-terminus, the 569-residue chain is Urease subunit alpha (569 aa).

Positions 131–569 (GSIDTHIHFI…VPMAQRYFLL (439 aa)) constitute a Urease domain. The Ni(2+) site is built by histidine 136, histidine 138, and lysine 219. N6-carboxylysine is present on lysine 219. A substrate-binding site is contributed by histidine 221. Ni(2+) contacts are provided by histidine 248 and histidine 274. Catalysis depends on histidine 322, which acts as the Proton donor. Aspartate 362 provides a ligand contact to Ni(2+).

It belongs to the metallo-dependent hydrolases superfamily. Urease alpha subunit family. Heterotrimer of UreA (gamma), UreB (beta) and UreC (alpha) subunits. Three heterotrimers associate to form the active enzyme. Ni cation is required as a cofactor. Carboxylation allows a single lysine to coordinate two nickel ions.

It is found in the cytoplasm. The catalysed reaction is urea + 2 H2O + H(+) = hydrogencarbonate + 2 NH4(+). It participates in nitrogen metabolism; urea degradation; CO(2) and NH(3) from urea (urease route): step 1/1. The chain is Urease subunit alpha from Prochlorococcus marinus (strain AS9601).